The chain runs to 83 residues: MGKNTSFVLDEHYSAFIDGEIAAGRYRSASEVIRSALRLLEDRETQLRALREALEAGERSGSSTPFDFDGFLGRKRADASRGR.

Residues 33–60 are a coiled coil; it reads IRSALRLLEDRETQLRALREALEAGERS. Residues 54–83 form a disordered region; it reads LEAGERSGSSTPFDFDGFLGRKRADASRGR.

The protein belongs to the ParD antitoxin family.

Its function is as follows. Antitoxin component of a type II toxin-antitoxin (TA) system. This chain is Antitoxin ParD1 (parD1), found in Mycobacterium tuberculosis (strain CDC 1551 / Oshkosh).